Reading from the N-terminus, the 159-residue chain is 6,7-dimethyl-8-ribityllumazine synthase (159 aa).

5-amino-6-(D-ribitylamino)uracil-binding positions include W27, 62-64 (SWE), and 86-88 (VLI). 91–92 (ST) contributes to the (2S)-2-hydroxy-3-oxobutyl phosphate binding site. H94 (proton donor) is an active-site residue. Position 119 (L119) interacts with 5-amino-6-(D-ribitylamino)uracil. R133 serves as a coordination point for (2S)-2-hydroxy-3-oxobutyl phosphate.

In terms of assembly, homopentamer.

It catalyses the reaction (2S)-2-hydroxy-3-oxobutyl phosphate + 5-amino-6-(D-ribitylamino)uracil = 6,7-dimethyl-8-(1-D-ribityl)lumazine + phosphate + 2 H2O + H(+). It participates in cofactor biosynthesis; riboflavin biosynthesis; riboflavin from 2-hydroxy-3-oxobutyl phosphate and 5-amino-6-(D-ribitylamino)uracil: step 1/2. Its activity is regulated as follows. Competitively inhibited by riboflavin (Ki of 17 uM). Functionally, catalyzes the formation of 6,7-dimethyl-8-ribityllumazine by condensation of 5-amino-6-(D-ribitylamino)uracil with 3,4-dihydroxy-2-butanone 4-phosphate. This is the penultimate step in the biosynthesis of riboflavin. Also binds riboflavin with an unexpected high affinity. This chain is 6,7-dimethyl-8-ribityllumazine synthase (rib4), found in Schizosaccharomyces pombe (strain 972 / ATCC 24843) (Fission yeast).